The chain runs to 103 residues: Large ribosomal subunit protein bL21 (103 aa).

Belongs to the bacterial ribosomal protein bL21 family. As to quaternary structure, part of the 50S ribosomal subunit. Contacts protein L20.

Its function is as follows. This protein binds to 23S rRNA in the presence of protein L20. This Shewanella denitrificans (strain OS217 / ATCC BAA-1090 / DSM 15013) protein is Large ribosomal subunit protein bL21.